The following is a 321-amino-acid chain: Iron(3+)-hydroxamate-binding protein YxeB (321 aa).

Positions 1 to 20 are cleaved as a signal peptide; it reads MKKNILLVGMLVLLLMFVSA. A lipid anchor (N-palmitoyl cysteine) is attached at Cys-21. Cys-21 carries S-diacylglycerol cysteine lipidation. Low complexity predominate over residues 24-33; the sequence is TASKGSSSDS. Residues 24–48 form a disordered region; that stretch reads TASKGSSSDSASEKTEMRTYKSPKG. A Fe/B12 periplasmic-binding domain is found at 58 to 316; sequence RIVTDFYAGE…IITDMLIKRA (259 aa).

The protein belongs to the bacterial solute-binding protein 8 family. In terms of assembly, the complex is composed of an ATP-binding protein (FhuC), two transmembrane proteins (FhuB and FhuG) and a solute-binding protein (FhuD or YxeB).

The protein resides in the cell membrane. The protein localises to the membrane raft. In terms of biological role, part of the ABC transporter complex FhuCBGD involved in iron(3+)-hydroxamate import. Binds the iron(3+)-hydroxamate complex and transfers it to the membrane-bound permease. Partially required for the transport of desferrioxamine. In Bacillus subtilis (strain 168), this protein is Iron(3+)-hydroxamate-binding protein YxeB (yxeB).